A 364-amino-acid polypeptide reads, in one-letter code: Peptide chain release factor 1 (364 aa).

Gln238 is modified (N5-methylglutamine).

Belongs to the prokaryotic/mitochondrial release factor family. Methylated by PrmC. Methylation increases the termination efficiency of RF1.

It is found in the cytoplasm. Peptide chain release factor 1 directs the termination of translation in response to the peptide chain termination codons UAG and UAA. In Psychrobacter sp. (strain PRwf-1), this protein is Peptide chain release factor 1.